The chain runs to 72 residues: MKPLSSAIAAALILFSAQGVAEQTTQPVVTSCANVVVVPPSQEHPPFDLNHMGTGSDKSDALGVPYYNQHAM.

This chain is Multiple antibiotic resistance protein MarB (marB), found in Escherichia coli (strain K12).